The sequence spans 76 residues: ATP synthase subunit 9, mitochondrial (76 aa).

Methionine 1 is subject to N-formylmethionine. Helical transmembrane passes span 14-34 and 52-72; these read ISTI…AALI and ILGF…SFLL.

The protein belongs to the ATPase C chain family. In terms of assembly, F-type ATPases have 2 components, CF(1) - the catalytic core - and CF(0) - the membrane proton channel. In yeast, the dimeric form of ATP synthase consists of 18 polypeptides: alpha, beta, gamma, delta, epsilon, 4 (B), 5 (OSCP), 6 (A), 8, 9 (C), d, E (Tim11), f, g, h, i, j and k.

It localises to the mitochondrion membrane. Its function is as follows. Mitochondrial membrane ATP synthase (F(1)F(0) ATP synthase or Complex V) produces ATP from ADP in the presence of a proton gradient across the membrane which is generated by electron transport complexes of the respiratory chain. F-type ATPases consist of two structural domains, F(1) - containing the extramembraneous catalytic core and F(0) - containing the membrane proton channel, linked together by a central stalk and a peripheral stalk. During catalysis, ATP synthesis in the catalytic domain of F(1) is coupled via a rotary mechanism of the central stalk subunits to proton translocation. Part of the complex F(0) domain. A homomeric c-ring of probably 10 subunits is part of the complex rotary element. The polypeptide is ATP synthase subunit 9, mitochondrial (ATP9) (Saccharomyces paradoxus (Yeast)).